An 893-amino-acid chain; its full sequence is Serine/threonine-protein kinase/endoribonuclease IRE1 (893 aa).

The signal sequence occupies residues 1–19 (MRSLRRVLLQLVLLAGVAF). Topologically, residues 20-379 (RGVRFDDAAD…NSVTKFSYRW (360 aa)) are lumenal. N-linked (GlcNAc...) asparagine glycans are attached at residues Asn105, Asn158, Asn259, and Asn351. The helical transmembrane segment at 380-397 (LFPTFLMLLIMACLVKLA) threads the bilayer. Residues 398-893 (DASKYCRQFV…FSKYFLGSSA (496 aa)) lie on the Cytoplasmic side of the membrane. A disordered region spans residues 451-478 (ASDKEGNGTGGSTEAQSNKAHDSTNVEL). The Protein kinase domain maps to 491 to 759 (CVYSKEIGKG…AVYVMHHPFF (269 aa)). ATP contacts are provided by residues 497-505 (IGKGSNGTV) and Lys519. Catalysis depends on Asp625, which acts as the Proton acceptor. One can recognise a KEN domain in the interval 762-890 (PELCLSFLRD…EEAFSKYFLG (129 aa)).

It belongs to the protein kinase superfamily. Ser/Thr protein kinase family. Homodimer; disulfide-linked. Dimer formation is driven by hydrophobic interactions within the N-terminal luminal domains and stabilized by disulfide bridges. Autophosphorylated. Expressed in roots, nodes, internodes, leaf sheaths, leaf blades, young ears and mature ears.

Its subcellular location is the endoplasmic reticulum membrane. It carries out the reaction L-seryl-[protein] + ATP = O-phospho-L-seryl-[protein] + ADP + H(+). It catalyses the reaction L-threonyl-[protein] + ATP = O-phospho-L-threonyl-[protein] + ADP + H(+). Functionally, involved in endoplasmic reticulum (ER) stress response. Senses unfolded proteins in the lumen of the ER via its N-terminal domain which leads to enzyme auto-activation. The active endoribonuclease domain splices bZIP50 mRNA to generate a new C-terminus, converting it into a potent unfolded-protein response (UPR) transcriptional activator, which then induces transcription of UPR target genes, such as luminal-binding protein (BiP) chaperones. This chain is Serine/threonine-protein kinase/endoribonuclease IRE1, found in Oryza sativa subsp. japonica (Rice).